A 609-amino-acid chain; its full sequence is Mitochondrial nucleoid-associated protein 1 (609 aa).

Over 1 to 552 the chain is Mitochondrial matrix; sequence MSDNPPRMEV…IRCNTTIRKS (552 aa). 3 disordered regions span residues 142–168, 183–202, and 410–441; these read ASEK…NPSE, SNQD…TTSG, and QLSL…HTPQ. A compositionally biased stretch (basic and acidic residues) spans 146–161; sequence TSPKRELAKDLPKSGE. Residues 418–441 show a composition bias toward polar residues; it reads DSQFQASHTGCQSPLCSAQRHTPQ. The helical transmembrane segment at 553-573 threads the bilayer; the sequence is GFGGITMLFTGYFVLCCSWSF. The Mitochondrial intermembrane portion of the chain corresponds to 574–609; the sequence is RRLKKLCRPLPWKSTVPPCIGVAKTTGDCRSKTCLD.

The protein localises to the mitochondrion inner membrane. Its subcellular location is the mitochondrion matrix. The protein resides in the mitochondrion nucleoid. Functionally, critical regulator of mitochondrial DNA (mtDNA) abundance. Binds dsDNA throughout the mitochondrial genome without sequence specificity and controls mtDNA copy number by promoting its replication. Also plays important roles in mitochondrial metabolism and cell proliferation. This is Mitochondrial nucleoid-associated protein 1 from Homo sapiens (Human).